The primary structure comprises 99 residues: DNA-directed RNA polymerase subunit omega (99 aa).

Belongs to the RNA polymerase subunit omega family. As to quaternary structure, the RNAP catalytic core consists of 2 alpha, 1 beta, 1 beta' and 1 omega subunit. When a sigma factor is associated with the core the holoenzyme is formed, which can initiate transcription.

The catalysed reaction is RNA(n) + a ribonucleoside 5'-triphosphate = RNA(n+1) + diphosphate. Its function is as follows. Promotes RNA polymerase assembly. Latches the N- and C-terminal regions of the beta' subunit thereby facilitating its interaction with the beta and alpha subunits. The sequence is that of DNA-directed RNA polymerase subunit omega from Deinococcus geothermalis (strain DSM 11300 / CIP 105573 / AG-3a).